The primary structure comprises 317 residues: Acetyl-coenzyme A carboxylase carboxyl transferase subunit alpha (317 aa).

One can recognise a CoA carboxyltransferase C-terminal domain in the interval L40 to E293.

The protein belongs to the AccA family. Acetyl-CoA carboxylase is a heterohexamer composed of biotin carboxyl carrier protein (AccB), biotin carboxylase (AccC) and two subunits each of ACCase subunit alpha (AccA) and ACCase subunit beta (AccD).

Its subcellular location is the cytoplasm. It catalyses the reaction N(6)-carboxybiotinyl-L-lysyl-[protein] + acetyl-CoA = N(6)-biotinyl-L-lysyl-[protein] + malonyl-CoA. The protein operates within lipid metabolism; malonyl-CoA biosynthesis; malonyl-CoA from acetyl-CoA: step 1/1. Functionally, component of the acetyl coenzyme A carboxylase (ACC) complex. First, biotin carboxylase catalyzes the carboxylation of biotin on its carrier protein (BCCP) and then the CO(2) group is transferred by the carboxyltransferase to acetyl-CoA to form malonyl-CoA. This is Acetyl-coenzyme A carboxylase carboxyl transferase subunit alpha from Rhizobium meliloti (strain 1021) (Ensifer meliloti).